The primary structure comprises 8903 residues: Nonribosomal peptide synthetase vlms (8903 aa).

One can recognise a Carrier 1 domain in the interval 11 to 84; that stretch reads GSCRTTLGKV…ELADSIDEQN (74 aa). The tract at residues 13–81 is thiolation (T) domain 1; sequence CRTTLGKVAA…TLAELADSID (69 aa). Serine 45 is modified (O-(pantetheine 4'-phosphoryl)serine). Adenylation (A) domain stretches follow at residues 59 to 736 and 989 to 1386; these read GIWV…SHLP and MAAQ…IKIR. Residues 572–953 form a condensation (C) domain 1 region; sequence VPHQLDTEKL…FLLDGVNMSI (382 aa). A Carrier 2 domain is found at 1524–1600; that stretch reads SSMSTVEQEL…QLALAAESQA (77 aa). A thiolation (T) domain 2 region spans residues 1529 to 1597; it reads VEQELRQIWS…TIPQLALAAE (69 aa). Residue serine 1561 is modified to O-(pantetheine 4'-phosphoryl)serine. Positions 1613-2050 are epimerase (E) domain 1; the sequence is FPLSPIQKMY…TVKELAAVSA (438 aa). Residues 2091-2523 are condensation (C) domain 2; that stretch reads DILPCSPIQQ…LLSVSEENKL (433 aa). An adenylation (A) domain 2 region spans residues 2546–2943; the sequence is MSSHADATAI…GRQDSQVKIR (398 aa). Residues 3084–3160 enclose the Carrier 3 domain; that stretch reads LFTTAIERQL…ELALQAKMVD (77 aa). The interval 3089 to 3157 is thiolation (T) domain 3; the sequence is IERQLRQVWS…TIPELALQAK (69 aa). Position 3121 is an O-(pantetheine 4'-phosphoryl)serine (serine 3121). The segment at 3174–3614 is epimerase (E) domain 2; that stretch reads FALSPIQQMY…AIKSLVEELM (441 aa). A condensation (C) domain 3 region spans residues 3655-4093; sequence EDILPCSPMQ…LMSTKDIQQL (439 aa). Residues 4114-4512 are adenylation (A) domain 3; it reads ERLNTQPESM…GRIDTQIKIR (399 aa). The 77-residue stretch at 4649–4725 folds into the Carrier 4 domain; the sequence is APRTTMEKKL…DLAEATELKC (77 aa). Positions 4654-4722 are thiolation (T) domain 4; it reads MEKKLRDLFA…ILADLAEATE (69 aa). Position 4686 is an O-(pantetheine 4'-phosphoryl)serine (serine 4686). Positions 4775-5191 are condensation (C) domain 4; sequence EDVYPCSPLQ…AQLQMLSEED (417 aa). The interval 5216 to 5614 is adenylation (A) domain 4; the sequence is ETMTSQPDAP…GRRDTQVKIR (399 aa). The 77-residue stretch at 5753-5829 folds into the Carrier 5 domain; sequence APTTAMEKRL…DLAQELEQRH (77 aa). The thiolation (T) domain 5 stretch occupies residues 5758–5826; it reads MEKRLQNLFC…RLGDLAQELE (69 aa). Serine 5790 is modified (O-(pantetheine 4'-phosphoryl)serine). Position 5875 (glutamate 5875) is a region of interest, condensation (C) domain 5. The interval 6311 to 6702 is adenylation (A) domain 5; sequence EEQMSLRPSE…GRMDGQIKIR (392 aa). The Carrier 6 domain occupies 6836 to 6912; sequence SSATNTERQL…ELAATLEVMD (77 aa). The interval 6841 to 6909 is thiolation (T) domain 6; that stretch reads TERQLRQIWS…TIPELAATLE (69 aa). An O-(pantetheine 4'-phosphoryl)serine modification is found at serine 6873. The interval 6923-7349 is epimerase (E) domain 3; sequence GFFELSPIQR…YGRTIKTLVE (427 aa). A condensation (C) domain 6 region spans residues 7391 to 7823; sequence EDILPCSPIQ…LVLTNDEAQI (433 aa). The segment at 7844–8240 is adenylation (A) domain 6; the sequence is EQMARKPEAQ…LDRIGTQVKI (397 aa). The 77-residue stretch at 8368–8444 folds into the Carrier 7 domain; sequence APISATEAVF…AMAACVSDVS (77 aa). Residues 8369–8441 are thiolation (T) domain 7; it reads PISATEAVFC…VLHAMAACVS (73 aa). An O-(pantetheine 4'-phosphoryl)serine modification is found at serine 8405. The condensation (C) domain 7 stretch occupies residues 8482–8897; that stretch reads DVLPTTEFQT…MENPRSTVGH (416 aa).

This sequence belongs to the NRP synthetase family.

The protein operates within secondary metabolite biosynthesis. Its function is as follows. Nonribosomal peptide synthetase; part of the gene cluster that mediates the biosynthesis of verlamelin, a lipopeptide that exhibits antifungal activity against plant pathogenic fungi. Verlamelin is a cyclic hexadepsipeptide and is bridged by ester bonding between a 5-hydroxytetradecanoic acid moiety and a carboxyl group on the terminal Val of amide-bonded tetradecanoyl-hexapeptide D-allo-Thr-D-Ala-L-Pro-L-Gln-D-Tyr-L-Val. VlmA and vlmB are altogether regarded as essential components in the biosynthesis of 5-hydroxytetradecanoic acid. VlmA catalyzes the hydroxylation at position C5 of tetradecanoic acid produced in primary metabolism, while the precise function of vlmB still remains to be solved. To be loaded onto the waiting NRPS, 5-hydroxytetradecanoic acid is activated in the form of acyladenylate by the AMP-dependent ligase vlmC. VlmS seems to accept the fatty-acyl intermediate onto the initial module to further elongate amino acid residues by the downstream modules. In addition, in the last module at its C-terminus, vlmS contains a surplus condensation (C) domain that may be involved in cyclization, the last step to form verlamelin. This chain is Nonribosomal peptide synthetase vlms, found in Lecanicillium sp.